The sequence spans 110 residues: Thiosulfate sulfurtransferase GlpE (110 aa).

Positions 17-105 (RENGAQVVDI…WRSVYPADTS (89 aa)) constitute a Rhodanese domain. Residue Cys65 is the Cysteine persulfide intermediate of the active site.

It belongs to the GlpE family.

Its subcellular location is the cytoplasm. The catalysed reaction is thiosulfate + hydrogen cyanide = thiocyanate + sulfite + 2 H(+). The enzyme catalyses thiosulfate + [thioredoxin]-dithiol = [thioredoxin]-disulfide + hydrogen sulfide + sulfite + 2 H(+). In terms of biological role, transferase that catalyzes the transfer of sulfur from thiosulfate to thiophilic acceptors such as cyanide or dithiols. May function in a CysM-independent thiosulfate assimilation pathway by catalyzing the conversion of thiosulfate to sulfite, which can then be used for L-cysteine biosynthesis. The sequence is that of Thiosulfate sulfurtransferase GlpE from Pseudomonas paraeruginosa (strain DSM 24068 / PA7) (Pseudomonas aeruginosa (strain PA7)).